Consider the following 572-residue polypeptide: Receptor-type adenylate cyclase GRESAG 4.2 (572 aa).

Over 1–225 (RKTLLTFGLN…PNGNALTPAQ (225 aa)) the chain is Extracellular. Residues N10, N77, and N152 are each glycosylated (N-linked (GlcNAc...) asparagine). Residues 226–251 (LDWCGWCRFACADTGSRLTVFLCCIM) traverse the membrane as a helical segment. At 252–572 (RNKRDNDNAP…TVRRLSVALQ (321 aa)) the chain is on the cytoplasmic side. Positions 269-424 (TLIFTDIESS…QTANTAARTE (156 aa)) constitute a Guanylate cyclase domain. 2 residues coordinate Mg(2+): D274 and D317.

Belongs to the adenylyl cyclase class-3 family. Requires Mg(2+) as cofactor.

Its subcellular location is the cell membrane. It carries out the reaction ATP = 3',5'-cyclic AMP + diphosphate. Could act as a receptor for an unknown ligand. This is Receptor-type adenylate cyclase GRESAG 4.2 (GRESAG 4.2) from Trypanosoma brucei brucei.